A 906-amino-acid chain; its full sequence is Translation initiation factor IF-2 (906 aa).

Disordered regions lie at residues 94-125, 165-232, and 270-321; these read APEKTEVIPEETENTVEESTAAETVESEPETA, ESEA…TGKK, and RQEQ…SSEV. Basic and acidic residues-rich tracts occupy residues 165 to 176, 222 to 232, and 270 to 284; these read ESEAEKGTEIEK, GPAEARETGKK, and RQEQKRREEAKKREA. The segment covering 299-313 has biased composition (basic residues); sequence QQRRSLKRGGKRKKY. The tr-type G domain maps to 405–574; it reads ERPPVITIMG…LLQAEMMELK (170 aa). The G1 stretch occupies residues 414 to 421; the sequence is GHVDHGKT. GTP is bound at residue 414–421; sequence GHVDHGKT. The G2 stretch occupies residues 439-443; it reads GITQH. Residues 460–463 form a G3 region; the sequence is DTPG. Residues 460–464 and 514–517 contribute to the GTP site; these read DTPGH and NKMD. Positions 514-517 are G4; sequence NKMD. The segment at 550–552 is G5; that stretch reads SAH.

It belongs to the TRAFAC class translation factor GTPase superfamily. Classic translation factor GTPase family. IF-2 subfamily.

It localises to the cytoplasm. In terms of biological role, one of the essential components for the initiation of protein synthesis. Protects formylmethionyl-tRNA from spontaneous hydrolysis and promotes its binding to the 30S ribosomal subunits. Also involved in the hydrolysis of GTP during the formation of the 70S ribosomal complex. In Sulfurovum sp. (strain NBC37-1), this protein is Translation initiation factor IF-2.